Reading from the N-terminus, the 379-residue chain is MALRGGHAAAAAGVSSGSEDDDEEAGFSRSYFLAKEKEPSSGKKRARAAGKLSDLNLVDEQVLRASLAEIPPKHEREVEALTRSYKEQYRNWLFELRCGFGLLMYGFGSKKMLLEDFASTTLSDFTVIVVNGYLPSINLKQVIVTIAEIFWEQTKLKRKRQTATRSQLQPFASQSIDDIISFLNNQTSDNGDDNVCLLIHNIDGPALRDAESQQYLAQVSCCPQVHVVASVDHVNAPLLWDKKMVHTQFKWSWYHVPTFAPYKVEGVFYPLILASGGHAQTMKTALVVLQSLTPNAQSVFRVLAEYQLAHEKEEGMHFSSLYTKCRERFLVSSQVTLNSHLTEFKDHDLVKIRKHSDGQDCLHIPLVSDALEKLLQELT.

The disordered stretch occupies residues 1 to 25; that stretch reads MALRGGHAAAAAGVSSGSEDDDEEA. The span at 8 to 17 shows a compositional bias: low complexity; that stretch reads AAAAAGVSSG.

The protein belongs to the ORC2 family. As to quaternary structure, component of the origin recognition complex (ORC) composed of at least ORC1, ORC2, ORC3, ORC4, ORC5 and ORC6. ORC is regulated in a cell-cycle and development dependent manner. It is sequentially assembled at the exit from anaphase of mitosis and disassembled as cells enter S phase.

The protein localises to the nucleus. Essential protein. Component of the origin recognition complex (ORC) that binds origins of replication. DNA-binding is ATP-dependent, however specific DNA sequences that define origins of replication have not been identified so far. ORC is required to assemble the pre-replication complex necessary to initiate DNA replication. This Oryza sativa subsp. indica (Rice) protein is Origin of replication complex subunit 2.